The sequence spans 23 residues: NADP-dependent malic enzyme (23 aa).

This sequence belongs to the malic enzymes family. In terms of assembly, homotetramer.

It catalyses the reaction (S)-malate + NADP(+) = pyruvate + CO2 + NADPH. It carries out the reaction oxaloacetate + H(+) = pyruvate + CO2. In Populus euphratica (Euphrates poplar), this protein is NADP-dependent malic enzyme.